A 388-amino-acid chain; its full sequence is FBD-associated F-box protein At5g60610 (388 aa).

Positions 1–47 (MDRISGLPDELLVKIISFVPTKVAVSTSILSKRWESLWKWVPKLECD) constitute an F-box domain. Positions 337 to 388 (NWKNIQRSVPKCLKSSLKTLEFAGYTARPEERDFLSFIFKKARCLKTSSISH) constitute an FBD domain.

The chain is FBD-associated F-box protein At5g60610 from Arabidopsis thaliana (Mouse-ear cress).